Here is a 474-residue protein sequence, read N- to C-terminus: 3-isopropylmalate dehydratase large subunit (474 aa).

[4Fe-4S] cluster-binding residues include Cys353, Cys414, and Cys417.

It belongs to the aconitase/IPM isomerase family. LeuC type 1 subfamily. As to quaternary structure, heterodimer of LeuC and LeuD. The cofactor is [4Fe-4S] cluster.

It carries out the reaction (2R,3S)-3-isopropylmalate = (2S)-2-isopropylmalate. The protein operates within amino-acid biosynthesis; L-leucine biosynthesis; L-leucine from 3-methyl-2-oxobutanoate: step 2/4. Its function is as follows. Catalyzes the isomerization between 2-isopropylmalate and 3-isopropylmalate, via the formation of 2-isopropylmaleate. This chain is 3-isopropylmalate dehydratase large subunit, found in Xylella fastidiosa (strain 9a5c).